Consider the following 195-residue polypeptide: dTDP-4-dehydrorhamnose 3,5-epimerase (195 aa).

Residues R31, E36, Q54–N56, and R67 contribute to the substrate site. The active-site Proton acceptor is the H70. 2 residues coordinate substrate: K80 and H127. Y140 serves as the catalytic Proton donor. Substrate contacts are provided by D151 and K176.

The protein belongs to the dTDP-4-dehydrorhamnose 3,5-epimerase family. Homodimer.

It carries out the reaction dTDP-4-dehydro-6-deoxy-alpha-D-glucose = dTDP-4-dehydro-beta-L-rhamnose. It participates in carbohydrate biosynthesis; dTDP-L-rhamnose biosynthesis. Its function is as follows. Catalyzes the epimerization of the C3' and C5'positions of dTDP-6-deoxy-D-xylo-4-hexulose, forming dTDP-6-deoxy-L-lyxo-4-hexulose. The polypeptide is dTDP-4-dehydrorhamnose 3,5-epimerase (Sinorhizobium fredii (strain NBRC 101917 / NGR234)).